A 346-amino-acid polypeptide reads, in one-letter code: Holliday junction branch migration complex subunit RuvB (346 aa).

The large ATPase domain (RuvB-L) stretch occupies residues Met1–Tyr182. Residues Ile21, Arg22, Gly63, Lys66, Thr67, Thr68, Glu129 to Phe131, Arg172, Tyr182, and Arg219 each bind ATP. Mg(2+) is bound at residue Thr67. The tract at residues Pro183 to Glu253 is small ATPAse domain (RuvB-S). The tract at residues Glu256–Arg346 is head domain (RuvB-H). Arg311 and Arg316 together coordinate DNA.

The protein belongs to the RuvB family. Homohexamer. Forms an RuvA(8)-RuvB(12)-Holliday junction (HJ) complex. HJ DNA is sandwiched between 2 RuvA tetramers; dsDNA enters through RuvA and exits via RuvB. An RuvB hexamer assembles on each DNA strand where it exits the tetramer. Each RuvB hexamer is contacted by two RuvA subunits (via domain III) on 2 adjacent RuvB subunits; this complex drives branch migration. In the full resolvosome a probable DNA-RuvA(4)-RuvB(12)-RuvC(2) complex forms which resolves the HJ.

It is found in the cytoplasm. It carries out the reaction ATP + H2O = ADP + phosphate + H(+). The RuvA-RuvB-RuvC complex processes Holliday junction (HJ) DNA during genetic recombination and DNA repair, while the RuvA-RuvB complex plays an important role in the rescue of blocked DNA replication forks via replication fork reversal (RFR). RuvA specifically binds to HJ cruciform DNA, conferring on it an open structure. The RuvB hexamer acts as an ATP-dependent pump, pulling dsDNA into and through the RuvAB complex. RuvB forms 2 homohexamers on either side of HJ DNA bound by 1 or 2 RuvA tetramers; 4 subunits per hexamer contact DNA at a time. Coordinated motions by a converter formed by DNA-disengaged RuvB subunits stimulates ATP hydrolysis and nucleotide exchange. Immobilization of the converter enables RuvB to convert the ATP-contained energy into a lever motion, pulling 2 nucleotides of DNA out of the RuvA tetramer per ATP hydrolyzed, thus driving DNA branch migration. The RuvB motors rotate together with the DNA substrate, which together with the progressing nucleotide cycle form the mechanistic basis for DNA recombination by continuous HJ branch migration. Branch migration allows RuvC to scan DNA until it finds its consensus sequence, where it cleaves and resolves cruciform DNA. This chain is Holliday junction branch migration complex subunit RuvB, found in Chlorobium phaeobacteroides (strain DSM 266 / SMG 266 / 2430).